The primary structure comprises 166 residues: Large ribosomal subunit protein uL10 (166 aa).

It belongs to the universal ribosomal protein uL10 family. In terms of assembly, part of the ribosomal stalk of the 50S ribosomal subunit. The N-terminus interacts with L11 and the large rRNA to form the base of the stalk. The C-terminus forms an elongated spine to which L12 dimers bind in a sequential fashion forming a multimeric L10(L12)X complex.

In terms of biological role, forms part of the ribosomal stalk, playing a central role in the interaction of the ribosome with GTP-bound translation factors. The sequence is that of Large ribosomal subunit protein uL10 from Limosilactobacillus reuteri (strain DSM 20016) (Lactobacillus reuteri).